Here is a 101-residue protein sequence, read N- to C-terminus: Protamine-3 (101 aa).

A disordered region spans residues Met1–Ser101. The segment covering Glu45–Gln67 has biased composition (acidic residues). Position 93 is a phosphoserine (Ser93).

This sequence belongs to the protamine P3 family. Testis.

It is found in the nucleus. It localises to the chromosome. In terms of biological role, protamines substitute for histones in the chromatin of sperm during the haploid phase of spermatogenesis. They compact sperm DNA into a highly condensed, stable and inactive complex. The chain is Protamine-3 (Prm3) from Mus musculus (Mouse).